The primary structure comprises 285 residues: Diaminopimelate epimerase (285 aa).

The substrate site is built by Asn-15 and Asn-68. Catalysis depends on Cys-77, which acts as the Proton donor. Residues 78-79 (GN), Asn-165, Asn-201, and 219-220 (ER) contribute to the substrate site. Cys-228 serves as the catalytic Proton acceptor. Residue 229–230 (GT) coordinates substrate.

The protein belongs to the diaminopimelate epimerase family. As to quaternary structure, homodimer.

It localises to the cytoplasm. The enzyme catalyses (2S,6S)-2,6-diaminopimelate = meso-2,6-diaminopimelate. It participates in amino-acid biosynthesis; L-lysine biosynthesis via DAP pathway; DL-2,6-diaminopimelate from LL-2,6-diaminopimelate: step 1/1. Functionally, catalyzes the stereoinversion of LL-2,6-diaminopimelate (L,L-DAP) to meso-diaminopimelate (meso-DAP), a precursor of L-lysine and an essential component of the bacterial peptidoglycan. The sequence is that of Diaminopimelate epimerase from Synechococcus sp. (strain JA-2-3B'a(2-13)) (Cyanobacteria bacterium Yellowstone B-Prime).